Here is a 484-residue protein sequence, read N- to C-terminus: tRNA sulfurtransferase (484 aa).

Residues 61–165 (TLLVELLGRI…NDKMMLIKAR (105 aa)) form the THUMP domain. Residues 183–184 (LI), Lys-265, Gly-287, and Gln-296 contribute to the ATP site. Cys-344 and Cys-456 are disulfide-bonded. Positions 404–484 (LSANEVILDI…DNVKVLNKIS (81 aa)) constitute a Rhodanese domain. Cys-456 functions as the Cysteine persulfide intermediate in the catalytic mechanism.

The protein belongs to the ThiI family.

The protein localises to the cytoplasm. It carries out the reaction [ThiI sulfur-carrier protein]-S-sulfanyl-L-cysteine + a uridine in tRNA + 2 reduced [2Fe-2S]-[ferredoxin] + ATP + H(+) = [ThiI sulfur-carrier protein]-L-cysteine + a 4-thiouridine in tRNA + 2 oxidized [2Fe-2S]-[ferredoxin] + AMP + diphosphate. It catalyses the reaction [ThiS sulfur-carrier protein]-C-terminal Gly-Gly-AMP + S-sulfanyl-L-cysteinyl-[cysteine desulfurase] + AH2 = [ThiS sulfur-carrier protein]-C-terminal-Gly-aminoethanethioate + L-cysteinyl-[cysteine desulfurase] + A + AMP + 2 H(+). The protein operates within cofactor biosynthesis; thiamine diphosphate biosynthesis. Its function is as follows. Catalyzes the ATP-dependent transfer of a sulfur to tRNA to produce 4-thiouridine in position 8 of tRNAs, which functions as a near-UV photosensor. Also catalyzes the transfer of sulfur to the sulfur carrier protein ThiS, forming ThiS-thiocarboxylate. This is a step in the synthesis of thiazole, in the thiamine biosynthesis pathway. The sulfur is donated as persulfide by IscS. This Histophilus somni (strain 2336) (Haemophilus somnus) protein is tRNA sulfurtransferase.